The chain runs to 238 residues: Orotidine 5'-phosphate decarboxylase (238 aa).

Residues Asp-10, Lys-32, 59–68, Thr-122, Arg-184, Gln-193, Gly-213, and Arg-214 contribute to the substrate site; that span reads DLKLHDIPNT. Lys-61 functions as the Proton donor in the catalytic mechanism.

This sequence belongs to the OMP decarboxylase family. Type 1 subfamily. Homodimer.

The enzyme catalyses orotidine 5'-phosphate + H(+) = UMP + CO2. Its pathway is pyrimidine metabolism; UMP biosynthesis via de novo pathway; UMP from orotate: step 2/2. Its function is as follows. Catalyzes the decarboxylation of orotidine 5'-monophosphate (OMP) to uridine 5'-monophosphate (UMP). The chain is Orotidine 5'-phosphate decarboxylase from Bacillus thuringiensis subsp. konkukian (strain 97-27).